A 371-amino-acid polypeptide reads, in one-letter code: RNA polymerase sigma factor SigA (371 aa).

A sigma-70 factor domain-2 region spans residues 137–207 (LAEANLRLVV…TRAIADQART (71 aa)). The short motif at 161–164 (DLIQ) is the Interaction with polymerase core subunit RpoC element. Positions 216–292 (ETINKLVREQ…DEVIENPVDY (77 aa)) are sigma-70 factor domain-3. Residues 305–358 (VLDTLTDREENVLRLRFGLDDGKMRTLEDVGKVFDVTRERIRQIEAKALRKLRH) are sigma-70 factor domain-4. A DNA-binding region (H-T-H motif) is located at residues 331–350 (LEDVGKVFDVTRERIRQIEA).

It belongs to the sigma-70 factor family. RpoD/SigA subfamily. As to quaternary structure, interacts transiently with the RNA polymerase catalytic core.

The protein resides in the cytoplasm. Its function is as follows. Sigma factors are initiation factors that promote the attachment of RNA polymerase to specific initiation sites and are then released. This sigma factor is the primary sigma factor during exponential growth. The chain is RNA polymerase sigma factor SigA from Streptococcus mutans serotype c (strain ATCC 700610 / UA159).